Here is a 280-residue protein sequence, read N- to C-terminus: MSALNLTVRVHPVVLFQVVDAFERRNADSHRVIGTLLGSVDKGVVEVTNCFCVPHKEHDDQVEAELSYALDMYDLNRKVNANESVVGWWATGNEVTNHSSVIHEYYARECNNPVHLTVDTSLQGGRMGLRAYVCIQLGVPGGKTGCMFTPIPVELTSYEPETFGLKLLQKTVGVSPAHRPKTVPPMLDLAQISEASTKLQSLLELILKYVDDVIAHKVTPDNAVGRQLLDLIHSVPHMTHEQFTQMFNANVRDLLMVITLSQLIKTQLQLNEKLTFLPTA.

Positions 8–138 (VRVHPVVLFQ…LRAYVCIQLG (131 aa)) constitute an MPN domain.

The protein belongs to the eIF-3 subunit F family. In terms of assembly, component of the eukaryotic translation initiation factor 3 (eIF-3) complex. The eIF-3 complex interacts with pix.

The protein resides in the cytoplasm. Functionally, component of the eukaryotic translation initiation factor 3 (eIF-3) complex, which is involved in protein synthesis of a specialized repertoire of mRNAs and, together with other initiation factors, stimulates binding of mRNA and methionyl-tRNAi to the 40S ribosome. The eIF-3 complex specifically targets and initiates translation of a subset of mRNAs involved in cell proliferation. The sequence is that of Eukaryotic translation initiation factor 3 subunit F-1 from Drosophila virilis (Fruit fly).